We begin with the raw amino-acid sequence, 208 residues long: Glutathione S-transferase F6 (208 aa).

One can recognise a GST N-terminal domain in the interval Ala2–Gly83. Glutathione-binding positions include Ser12–Thr13, His41–Lys42, Lys54–Val55, and Glu67–Ser68. In terms of domain architecture, GST C-terminal spans Thr89–Leu208.

It belongs to the GST superfamily. Phi family.

The protein resides in the cytoplasm. The protein localises to the cytosol. The catalysed reaction is RX + glutathione = an S-substituted glutathione + a halide anion + H(+). Functionally, involved in camalexin biosynthesis by probably catalyzing the conjugation of GSH with indole-3-acetonitrile (IAN). May be involved in the conjugation of reduced glutathione to a wide number of exogenous and endogenous hydrophobic electrophiles and have a detoxification role against certain herbicides. The sequence is that of Glutathione S-transferase F6 (GSTF6) from Arabidopsis thaliana (Mouse-ear cress).